The chain runs to 545 residues: CTP synthase (545 aa).

The tract at residues 1-266 (MKTNYIFVTG…DDYICKRFSL (266 aa)) is amidoligase domain. A CTP-binding site is contributed by S14. UTP is bound at residue S14. Residues 15-20 (SLGKGI) and D72 each bind ATP. Mg(2+) contacts are provided by D72 and E140. CTP-binding positions include 147–149 (DIE), 187–192 (KTKPTQ), and K223. Residues 187 to 192 (KTKPTQ) and K223 each bind UTP. 239-241 (KDV) is a binding site for ATP. A Glutamine amidotransferase type-1 domain is found at 291 to 542 (TIGMVGKYVE…VKAAGKYQKG (252 aa)). G352 contributes to the L-glutamine binding site. The active-site Nucleophile; for glutamine hydrolysis is C379. L-glutamine contacts are provided by residues 380–383 (LGMQ), E403, and R470. Active-site residues include H515 and E517.

The protein belongs to the CTP synthase family. As to quaternary structure, homotetramer.

It carries out the reaction UTP + L-glutamine + ATP + H2O = CTP + L-glutamate + ADP + phosphate + 2 H(+). The catalysed reaction is L-glutamine + H2O = L-glutamate + NH4(+). It catalyses the reaction UTP + NH4(+) + ATP = CTP + ADP + phosphate + 2 H(+). The protein operates within pyrimidine metabolism; CTP biosynthesis via de novo pathway; CTP from UDP: step 2/2. Allosterically activated by GTP, when glutamine is the substrate; GTP has no effect on the reaction when ammonia is the substrate. The allosteric effector GTP functions by stabilizing the protein conformation that binds the tetrahedral intermediate(s) formed during glutamine hydrolysis. Inhibited by the product CTP, via allosteric rather than competitive inhibition. Functionally, catalyzes the ATP-dependent amination of UTP to CTP with either L-glutamine or ammonia as the source of nitrogen. Regulates intracellular CTP levels through interactions with the four ribonucleotide triphosphates. This chain is CTP synthase, found in Photorhabdus laumondii subsp. laumondii (strain DSM 15139 / CIP 105565 / TT01) (Photorhabdus luminescens subsp. laumondii).